The primary structure comprises 137 residues: Large ribosomal subunit protein uL16 (137 aa).

Basic residues predominate over residues 1–21 (MLSPKKVKFRKRQKGRLKGKA). The interval 1–22 (MLSPKKVKFRKRQKGRLKGKAQ) is disordered.

Belongs to the universal ribosomal protein uL16 family. As to quaternary structure, part of the 50S ribosomal subunit.

Its function is as follows. Binds 23S rRNA and is also seen to make contacts with the A and possibly P site tRNAs. The sequence is that of Large ribosomal subunit protein uL16 from Maridesulfovibrio salexigens (strain ATCC 14822 / DSM 2638 / NCIMB 8403 / VKM B-1763) (Desulfovibrio salexigens).